A 472-amino-acid chain; its full sequence is Phosphoenolpyruvate carboxykinase (ATP), glycosomal (472 aa).

Residue 221–228 participates in ATP binding; it reads GLSGTGKT.

Belongs to the phosphoenolpyruvate carboxykinase (ATP) family. Homodimer.

The protein resides in the glycosome. The catalysed reaction is oxaloacetate + ATP = phosphoenolpyruvate + ADP + CO2. It functions in the pathway carbohydrate biosynthesis; gluconeogenesis. Functionally, P60 has the capability to bind to microtubules and membrane vesicles in vitro. This Trypanosoma brucei brucei protein is Phosphoenolpyruvate carboxykinase (ATP), glycosomal.